Reading from the N-terminus, the 105-residue chain is Heat shock protein HspQ (105 aa).

It belongs to the HspQ family.

Its subcellular location is the cytoplasm. In terms of biological role, involved in the degradation of certain denaturated proteins, including DnaA, during heat shock stress. In Sodalis glossinidius (strain morsitans), this protein is Heat shock protein HspQ.